Reading from the N-terminus, the 668-residue chain is Phosphatidylinositol 4-phosphate 5-kinase type-1 gamma (668 aa).

The tract at residues S45 to G67 is disordered. In terms of domain architecture, PIPK spans T75–V443. K265 and K268 each carry N6-acetyllysine. The residue at position 459 (R459) is an Asymmetric dimethylarginine; alternate. R459 is subject to Omega-N-methylarginine; alternate. Positions T526–I535 are enriched in low complexity. Disordered regions lie at residues T526–Q578 and E593–T642. S555 is modified (phosphoserine). The residue at position 639 (Y639) is a Phosphotyrosine; by EGFR. Residues P641–T668 form a mediates interaction with TLN2 region. Y649 is subject to Phosphotyrosine; by CSK. The residue at position 650 (S650) is a Phosphoserine; by CDK5, MAPK1 and CDK1. 2 positions are modified to phosphoserine: S662 and S666. T668 carries the post-translational modification Phosphothreonine.

In terms of assembly, interacts with TLN1. Interacts with TLN2; interaction stimulates 1-phosphatidylinositol-4-phosphate 5-kinase activity. May compete with beta-integrins for the same binding site on TLN1 and TLN2. Interacts with ARF6; interaction stimulates 1-phosphatidylinositol-4-phosphate 5-kinase activity. Interacts with AP2B1. Interacts with AP2M1; phosphorylation of PIP5K1C by CSK disrupts the interaction; clathrin competes with PIP5K1C. Interacts with CDH1. Interacts with CSK. Interacts with PLCG1; interaction is abolished upon EGF stimulation. Interacts with LAPTM4B; promotes SNX5 association with LAPTM4B; kinase activity of PIP5K1C is required; interaction is regulated by phosphatidylinositol 4,5-bisphosphate generated by PIP5K1C. Post-translationally, phosphorylation on Ser-650 negatively regulates binding to TLN2 and is strongly stimulated in mitosis. Phosphorylation on Tyr-649 is necessary for targeting to focal adhesions. Phosphorylation on Ser-650 and Tyr-649 are mutually exclusive. Phosphorylated by SYK and CSK. Tyrosine phosphorylation is enhanced by PTK2 signaling. Phosphorylated at Tyr-639 upon EGF stimulation. Some studies suggest that phosphorylation on Tyr-649 enhances binding to tailins (TLN1 and TLN2). According to PubMed:15738269 phosphorylation at Tyr-649 does not directly enhance binding to tailins (TLN1 and TLN2) but may act indirectly by inhibiting phosphorylation at Ser-650. Acetylation at Lys-265 and Lys-268 seems to decrease lipid 1-phosphatidylinositol-4-phosphate 5-kinase activity. Deacetylation of these sites by SIRT1 positively regulates the exocytosis of TSH-containing granules from pituitary cells. As to expression, isoform 1 is strongly expressed in brain and also detected in heart and lung. Isoform 2 is strongly expressed in pancreas and liver and in lesser quantities in brain, heart, lung and kidney. In terms of tissue distribution, isoform 3 is detected in large amounts in heart and large intestine, is also present in lung, pancreas and thyroid, and to a lesser extent in brain, stomach and kidney.

It is found in the cell membrane. The protein localises to the endomembrane system. The protein resides in the cytoplasm. It localises to the cell junction. Its subcellular location is the focal adhesion. It is found in the adherens junction. The protein localises to the cell projection. The protein resides in the ruffle membrane. It localises to the phagocytic cup. Its subcellular location is the uropodium. It is found in the nucleus. The catalysed reaction is a 1,2-diacyl-sn-glycero-3-phospho-(1D-myo-inositol 4-phosphate) + ATP = a 1,2-diacyl-sn-glycero-3-phospho-(1D-myo-inositol-4,5-bisphosphate) + ADP + H(+). It catalyses the reaction 1-octadecanoyl-2-(5Z,8Z,11Z,14Z)-eicosatetraenoyl-sn-glycero-3-phospho-1D-myo-inositol 4-phosphate + ATP = 1-octadecanoyl-2-(5Z,8Z,11Z,14Z)-eicosatetraenoyl-sn-glycero-3-phospho-1D-myo-inositol 4,5-bisphosphate + ADP + H(+). The enzyme catalyses 1-octadecanoyl-2-(9Z)-octadecenoyl-sn-glycero-3-phospho-1D-myo-inositol 4-phosphate + ATP = 1-octadecanoyl-2-(9Z)-octadecenoyl-sn-glycero-3-phospho-1D-myo-inositol 4,5-bisphosphate + ADP + H(+). It carries out the reaction 1-octadecanoyl-2-(9Z)-octadecenoyl-sn-glycero-3-phospho-1D-myo-inositol + ATP = 1-octadecanoyl-2-(9Z)-octadecenoyl-sn-glycero-3-phospho-1D-myo-inositol 5-phosphate + ADP + H(+). The catalysed reaction is 1-octadecanoyl-2-(9Z,12Z)-octadecadienoyl-sn-glycero-3-phospho-1D-myo-inositol + ATP = 1-octadecanoyl-2-(9Z,12Z)-octadecadienoyl-sn-glycero-3-phospho-1D-myo-inositol 5-phosphate + ADP + H(+). It catalyses the reaction 1-octadecanoyl-2-(5Z,8Z,11Z,14Z-eicosatetraenoyl)-sn-glycero-3-phospho-(1D-myo-inositol) + ATP = 1-octadecanoyl-2-(5Z,8Z,11Z,14Z)-eicosatetraenoyl-sn-glycero-3-phospho-1D-myo-inositol 5-phosphate + ADP + H(+). The enzyme catalyses 1,2-di-(9Z,12Z)-octadecadienoyl-sn-glycero-3-phospho-1D-myo-inositol + ATP = 1,2-di(9Z,12Z)-octadecadienoyl-sn-glycero-3-phospho-1D-myo-inositol 5-phosphate + ADP + H(+). Its function is as follows. Catalyzes the phosphorylation of phosphatidylinositol 4-phosphate (PtdIns(4)P/PI4P) to form phosphatidylinositol 4,5-bisphosphate (PtdIns(4,5)P2/PIP2), a lipid second messenger that regulates several cellular processes such as signal transduction, vesicle trafficking, actin cytoskeleton dynamics, cell adhesion, and cell motility. PtdIns(4,5)P2 can directly act as a second messenger or can be utilized as a precursor to generate other second messengers: inositol 1,4,5-trisphosphate (IP3), diacylglycerol (DAG) or phosphatidylinositol-3,4,5-trisphosphate (PtdIns(3,4,5)P3/PIP3). PIP5K1A-mediated phosphorylation of PtdIns(4)P is the predominant pathway for PtdIns(4,5)P2 synthesis. Together with PIP5K1A, is required for phagocytosis, both enzymes regulating different types of actin remodeling at sequential steps. Promotes particle attachment by generating the pool of PtdIns(4,5)P2 that induces controlled actin depolymerization to facilitate Fc-gamma-R clustering. Mediates RAC1-dependent reorganization of actin filaments. Required for synaptic vesicle transport. Controls the plasma membrane pool of PtdIns(4,5)P2 implicated in synaptic vesicle endocytosis and exocytosis. Plays a role in endocytosis mediated by clathrin and AP-2 (adaptor protein complex 2). Required for clathrin-coated pits assembly at the synapse. Participates in cell junction assembly. Modulates adherens junctions formation by facilitating CDH1/cadherin trafficking. Required for focal adhesion dynamics. Modulates the targeting of talins (TLN1 and TLN2) to the plasma membrane and their efficient assembly into focal adhesions. Regulates the interaction between talins (TLN1 and TLN2) and beta-integrins. Required for uropodium formation and retraction of the cell rear during directed migration. Has a role in growth factor-stimulated directional cell migration and adhesion. Required for talin assembly into nascent adhesions forming at the leading edge toward the direction of the growth factor. Negative regulator of T-cell activation and adhesion. Negatively regulates integrin alpha-L/beta-2 (LFA-1) polarization and adhesion induced by T-cell receptor. Together with PIP5K1A has a role during embryogenesis and together with PIP5K1B may have a role immediately after birth. This chain is Phosphatidylinositol 4-phosphate 5-kinase type-1 gamma, found in Homo sapiens (Human).